A 304-amino-acid polypeptide reads, in one-letter code: MWLKLILAIVILIECIVVIYLPSHIESRIMNKKKHKIFNMENFENVASGAILALAFIHMLPEVIGLLNKNNLTIYCCFGLILISVTFLNITDILYDHHTENCSDIDNAEKNTNKFTINSASDKNIRDHIDIEMESLSIKENTNLSNNFIFDTFKSNAFFIVLSLFIHSFVEGLLIGSLKDKNPIIIVGLSMIAHKWAECLMIYKNAVKKTKDPILSSIYAWSFILSLPLGILVAVLSFSSNEFVEIIFSSIACGFFLYLSFNMTKDITVTKANKFYISFSYFFGVCGMSTLMIVFNYLEKSNVV.

Transmembrane regions (helical) follow at residues Met1–Leu21, Val46–Leu66, Ile74–Leu94, Phe158–Leu178, Pro183–Tyr203, Ile218–Phe238, Phe243–Met263, and Phe275–Phe295.

The protein resides in the cell membrane. Putative transporter for the divalent zinc and iron cations. Required for the development of liver-stage parasites. This Plasmodium berghei (strain Anka) protein is Putative metal ion transporter ZIPCO.